Here is a 385-residue protein sequence, read N- to C-terminus: Succinate--CoA ligase [ADP-forming] subunit beta (385 aa).

Residues 9–237 form the ATP-grasp domain; sequence KEILRQFGVN…LEAEHPLEIE (229 aa). Residues K45, 52 to 54, V94, and E101 each bind ATP; that span reads GRG. The Mg(2+) site is built by N192 and D206. Residues N257 and 314-316 each bind substrate; that span reads GIT.

This sequence belongs to the succinate/malate CoA ligase beta subunit family. In terms of assembly, heterotetramer of two alpha and two beta subunits. Mg(2+) serves as cofactor.

The catalysed reaction is succinate + ATP + CoA = succinyl-CoA + ADP + phosphate. It carries out the reaction GTP + succinate + CoA = succinyl-CoA + GDP + phosphate. It functions in the pathway carbohydrate metabolism; tricarboxylic acid cycle; succinate from succinyl-CoA (ligase route): step 1/1. In terms of biological role, succinyl-CoA synthetase functions in the citric acid cycle (TCA), coupling the hydrolysis of succinyl-CoA to the synthesis of either ATP or GTP and thus represents the only step of substrate-level phosphorylation in the TCA. The beta subunit provides nucleotide specificity of the enzyme and binds the substrate succinate, while the binding sites for coenzyme A and phosphate are found in the alpha subunit. The sequence is that of Succinate--CoA ligase [ADP-forming] subunit beta from Deinococcus deserti (strain DSM 17065 / CIP 109153 / LMG 22923 / VCD115).